An 853-amino-acid polypeptide reads, in one-letter code: DNA mismatch repair protein MutS (853 aa).

613–620 is an ATP binding site; it reads GPNMGGKS.

The protein belongs to the DNA mismatch repair MutS family.

In terms of biological role, this protein is involved in the repair of mismatches in DNA. It is possible that it carries out the mismatch recognition step. This protein has a weak ATPase activity. This chain is DNA mismatch repair protein MutS, found in Vibrio atlanticus (strain LGP32) (Vibrio splendidus (strain Mel32)).